The primary structure comprises 42 residues: Photosystem I reaction center subunit IX (42 aa).

Residues 8–28 (YLSTIPVVGAIWLTFTAGFII) traverse the membrane as a helical segment.

It belongs to the PsaJ family.

It localises to the plastid. The protein localises to the chloroplast thylakoid membrane. Functionally, may help in the organization of the PsaE and PsaF subunits. The protein is Photosystem I reaction center subunit IX of Gracilaria tenuistipitata var. liui (Red alga).